A 504-amino-acid chain; its full sequence is MRRSISSKAKSFLHRNLLYSGNSGTSPSSSFSICGFCFSRRAYSNGSDYREMLRNGIRFMKLDDSLDLFFHMVQCRPLPSIADFSRLLSAISKMKKYDVVIYLWEQMQMLGIPHNLCTCNILLNCFCRCSQLSLALSFLGKMIKLGHEPSIVTFGSLLNGFCRGDRVYDALYMFDQMVGMGYKPNVVIYNTIIDGLCKSKQVDNALDLLNRMEKDGIGPDVVTYNSLISGLCSSGRWSDATRMVSCMTKREIYPDVFTFNALIDACVKEGRVSEAEEFYEEMIRRSLDPDIVTYSLLIYGLCMYSRLDEAEEMFGFMVSKGCFPDVVTYSILINGYCKSKKVEHGMKLFCEMSQRGVVRNTVTYTILIQGYCRAGKLNVAEEIFRRMVFCGVHPNIITYNVLLHGLCDNGKIEKALVILADMQKNGMDADIVTYNIIIRGMCKAGEVADAWDIYCSLNCQGLMPDIWTYTTMMLGLYKKGLRREADALFRKMKEDGILPNECYV.

The transit peptide at 1–43 (MRRSISSKAKSFLHRNLLYSGNSGTSPSSSFSICGFCFSRRAY) directs the protein to the mitochondrion. 13 PPR repeats span residues 45–79 (NGSDYREMLRNGIRFMKLDDSLDLFFHMVQCRPLP), 80–114 (SIADFSRLLSAISKMKKYDVVIYLWEQMQMLGIPH), 115–149 (NLCTCNILLNCFCRCSQLSLALSFLGKMIKLGHEP), 150–184 (SIVTFGSLLNGFCRGDRVYDALYMFDQMVGMGYKP), 185–219 (NVVIYNTIIDGLCKSKQVDNALDLLNRMEKDGIGP), 220–254 (DVVTYNSLISGLCSSGRWSDATRMVSCMTKREIYP), 255–289 (DVFTFNALIDACVKEGRVSEAEEFYEEMIRRSLDP), 290–324 (DIVTYSLLIYGLCMYSRLDEAEEMFGFMVSKGCFP), 325–359 (DVVTYSILINGYCKSKKVEHGMKLFCEMSQRGVVR), 360–394 (NTVTYTILIQGYCRAGKLNVAEEIFRRMVFCGVHP), 395–429 (NIITYNVLLHGLCDNGKIEKALVILADMQKNGMDA), 430–464 (DIVTYNIIIRGMCKAGEVADAWDIYCSLNCQGLMP), and 465–499 (DIWTYTTMMLGLYKKGLRREADALFRKMKEDGILP).

This sequence belongs to the PPR family. P subfamily.

The protein resides in the mitochondrion. The protein is Pentatricopeptide repeat-containing protein At5g16640, mitochondrial of Arabidopsis thaliana (Mouse-ear cress).